The chain runs to 299 residues: Putative cuticle collagen 155 (299 aa).

The signal sequence occupies residues 1-27 (MEFEQRIKAYRFVAYSAVAFSVVAVLS). Triple-helical region regions lie at residues 103–132 (GAAG…PGHP), 151–177 (GPPG…PGQD), 181–202 (GAPG…GAPG), and 216–278 (GAPG…VGEK). Residues 107 to 278 (PAGTPGKPGR…SGTPGGVGEK (172 aa)) are disordered. Residues 129 to 161 (PGHPPQQPCDPITPPPCQPCPQGPPGPPGPPGP) show a composition bias toward pro residues. Over residues 163 to 172 (GDAGGNGNPG) the composition is skewed to gly residues. Residues 173 to 197 (SPGQDGQPGAPGNKGPSGPNGNPGA) show a composition bias toward low complexity. Pro residues predominate over residues 215–233 (PGAPGPQGTPGPQGPPGQP). Residues 250-268 (PNGNPGQPGADGNPGAPGQ) are compositionally biased toward low complexity.

Belongs to the cuticular collagen family. In terms of assembly, collagen polypeptide chains are complexed within the cuticle by disulfide bonds and other types of covalent cross-links.

In terms of biological role, nematode cuticles are composed largely of collagen-like proteins. The cuticle functions both as an exoskeleton and as a barrier to protect the worm from its environment. The protein is Putative cuticle collagen 155 (col-155) of Caenorhabditis elegans.